The sequence spans 621 residues: ATP-dependent lipid A-core flippase (621 aa).

The next 5 helical transmembrane spans lie at 32–52 (IVAALIAIFGVAATESYLAAF), 91–111 (VWGTENKIWTVPLFLIILVVI), 192–212 (IVLLYLNWQLSLIVVLMFPLL), 286–306 (SPFSELIASIALAVVIFIALW), and 312–332 (YTTIGEFMAFIVAMLQMYAPI). An ABC transmembrane type-1 domain is found at 33-344 (VAALIAIFGV…LANISIPMQT (312 aa)). Residues 378-611 (FRNVDVEYRS…NGYYTMLRNI (234 aa)) enclose the ABC transporter domain. 410–417 (GRSGSGKS) contributes to the ATP binding site.

This sequence belongs to the ABC transporter superfamily. Lipid exporter (TC 3.A.1.106) family. Homodimer.

It is found in the cell inner membrane. The enzyme catalyses ATP + H2O + lipid A-core oligosaccharideSide 1 = ADP + phosphate + lipid A-core oligosaccharideSide 2.. In terms of biological role, involved in lipopolysaccharide (LPS) biosynthesis. Translocates lipid A-core from the inner to the outer leaflet of the inner membrane. Transmembrane domains (TMD) form a pore in the inner membrane and the ATP-binding domain (NBD) is responsible for energy generation. The protein is ATP-dependent lipid A-core flippase of Neisseria meningitidis serogroup B (strain ATCC BAA-335 / MC58).